We begin with the raw amino-acid sequence, 34 residues long: Photosystem II reaction center protein M (34 aa).

A helical transmembrane segment spans residues 5-25 (ILGLTATALFIIIPTSFLLIL).

It belongs to the PsbM family. PSII is composed of 1 copy each of membrane proteins PsbA, PsbB, PsbC, PsbD, PsbE, PsbF, PsbH, PsbI, PsbJ, PsbK, PsbL, PsbM, PsbT, PsbX, PsbY, PsbZ, Psb30/Ycf12, at least 3 peripheral proteins of the oxygen-evolving complex and a large number of cofactors. It forms dimeric complexes.

It is found in the plastid. Its subcellular location is the chloroplast thylakoid membrane. One of the components of the core complex of photosystem II (PSII). PSII is a light-driven water:plastoquinone oxidoreductase that uses light energy to abstract electrons from H(2)O, generating O(2) and a proton gradient subsequently used for ATP formation. It consists of a core antenna complex that captures photons, and an electron transfer chain that converts photonic excitation into a charge separation. This subunit is found at the monomer-monomer interface. This Stigeoclonium helveticum (Green alga) protein is Photosystem II reaction center protein M.